The chain runs to 337 residues: Eukaryotic translation initiation factor 3 subunit I (337 aa).

5 WD repeats span residues 8–47 (GHERSLNQIKFNRDGDLIFSVAKDKIVCAWWSANGERLGT), 50–91 (GHQG…KVWD), 147–186 (CTESKATVAGWSYMGKYIIAGHEDGSVSQYDGKTGEQLEN), 191–230 (EFDHQINDIQFSADRTYFITASKDKSAKLMSTRNLAILKT), and 288–327 (GHFGPLNTVHIHPAGTAYASGGEDGYVRVHHFDKPYFDFM).

Belongs to the eIF-3 subunit I family. In terms of assembly, component of the eukaryotic translation initiation factor 3 (eIF-3) complex.

Its subcellular location is the cytoplasm. In terms of biological role, component of the eukaryotic translation initiation factor 3 (eIF-3) complex, which is involved in protein synthesis of a specialized repertoire of mRNAs and, together with other initiation factors, stimulates binding of mRNA and methionyl-tRNAi to the 40S ribosome. The eIF-3 complex specifically targets and initiates translation of a subset of mRNAs involved in cell proliferation. The chain is Eukaryotic translation initiation factor 3 subunit I (tif34) from Aspergillus niger (strain ATCC MYA-4892 / CBS 513.88 / FGSC A1513).